Reading from the N-terminus, the 341-residue chain is tRNA N6-adenosine threonylcarbamoyltransferase (341 aa).

Residues His111 and His115 each coordinate Fe cation. Substrate is bound by residues 134-138, Asp167, Gly180, and Asn276; that span reads LVSGG. Position 304 (Asp304) interacts with Fe cation.

Belongs to the KAE1 / TsaD family. Fe(2+) is required as a cofactor.

The protein localises to the cytoplasm. It carries out the reaction L-threonylcarbamoyladenylate + adenosine(37) in tRNA = N(6)-L-threonylcarbamoyladenosine(37) in tRNA + AMP + H(+). Its function is as follows. Required for the formation of a threonylcarbamoyl group on adenosine at position 37 (t(6)A37) in tRNAs that read codons beginning with adenine. Is involved in the transfer of the threonylcarbamoyl moiety of threonylcarbamoyl-AMP (TC-AMP) to the N6 group of A37, together with TsaE and TsaB. TsaD likely plays a direct catalytic role in this reaction. This is tRNA N6-adenosine threonylcarbamoyltransferase from Pseudomonas fluorescens (strain ATCC BAA-477 / NRRL B-23932 / Pf-5).